The following is a 449-amino-acid chain: Signal recognition particle protein (449 aa).

Residues 109–116 (GLQGSGKT), 191–195 (DTAGR), and 249–252 (SRID) each bind GTP.

Belongs to the GTP-binding SRP family. SRP54 subfamily. As to quaternary structure, part of the signal recognition particle protein translocation system, which is composed of SRP and FtsY. SRP is a ribonucleoprotein composed of Ffh and a 4.5S RNA molecule.

It localises to the cytoplasm. The catalysed reaction is GTP + H2O = GDP + phosphate + H(+). In terms of biological role, involved in targeting and insertion of nascent membrane proteins into the cytoplasmic membrane. Binds to the hydrophobic signal sequence of the ribosome-nascent chain (RNC) as it emerges from the ribosomes. The SRP-RNC complex is then targeted to the cytoplasmic membrane where it interacts with the SRP receptor FtsY. Interaction with FtsY leads to the transfer of the RNC complex to the Sec translocase for insertion into the membrane, the hydrolysis of GTP by both Ffh and FtsY, and the dissociation of the SRP-FtsY complex into the individual components. In Rickettsia bellii (strain RML369-C), this protein is Signal recognition particle protein.